The chain runs to 119 residues: MKKVKEAEKKNIKRKKRIRDRIGFGVAERPRVTIFKSNKYFYAQVIDDIVGRTLASVSTIEKELSLNKNISDVKKLGEVLAKRLKDKNISKLIFDRNGYKYHGLIAGFATALREAGIDV.

The protein belongs to the universal ribosomal protein uL18 family. As to quaternary structure, part of the 50S ribosomal subunit; part of the 5S rRNA/L5/L18/L25 subcomplex. Contacts the 5S and 23S rRNAs.

Functionally, this is one of the proteins that bind and probably mediate the attachment of the 5S RNA into the large ribosomal subunit, where it forms part of the central protuberance. The polypeptide is Large ribosomal subunit protein uL18 (Borrelia recurrentis (strain A1)).